The chain runs to 94 residues: UPF0768 protein YBL029C-A (94 aa).

This sequence belongs to the UPF0768 family.

The protein localises to the cell membrane. The protein is UPF0768 protein YBL029C-A of Saccharomyces cerevisiae (strain ATCC 204508 / S288c) (Baker's yeast).